A 579-amino-acid chain; its full sequence is MNAIVALCHFCELHGPRTLFCTEALHSPHPQGASCGDSIGQGEQAEDEEMGIQMSSRIRCHSPAEGASADSNSPRPKKSDMCEGCRSLAAGHPGYISHDKETSIKYVSHQHPNHPQLFSIVRQACVRSLSCEVCPGREGPIFFGDEQHGFVFSHTFFIKDSLARGFQRWYSIIVIMMDRIYLINSWPFLLAKIRGVIDELQGKALKVFEAEQFGCPQRPLRINTAFTPFLHQRNGNAARSLTSLTSDDNLWACLHTSFAWLLKACGCRLTEKLLEGAPTEDTLVQMEKQADLEEECAAREVADGEEGRPRLQPELMEGRELSKCPTESSVLSDCSWNMVQRRMGVFRSLRHMRQVLGASAFRMLAWHVLMGNQVIWKGQDQELIQSAFDVLQAMLPVGCVRVIPYSEKYEDAYRCNFLGLSPQAEIPLHVQSSEFSVMVDVRHANRSNLYPALFVDDEPLSKYEFVVASGSPVTIDKVGLTILNKIEAALSNENLSMDVVDQCLICLKEEWMNKVKVLFKFTKVDSRPKEDTQKLLGILGASEEDNIKLLKFWMTGLSKTYKSHLMSSVRSPTASECRN.

The disordered stretch occupies residues Gly32–Ile52. Residues Arg86–Thr242 form the uDENN FLCN/SMCR8-type domain. The 155-residue stretch at Asn337–Ser491 folds into the cDENN FLCN/SMCR8-type domain. Positions Glu493–Ser558 constitute a dDENN FLCN/SMCR8-type domain.

The protein belongs to the folliculin family. In terms of assembly, component of the lysosomal folliculin complex (LFC).

It is found in the lysosome membrane. The protein resides in the cytoplasm. Its subcellular location is the cytosol. It localises to the cell projection. The protein localises to the cilium. It is found in the cytoskeleton. The protein resides in the microtubule organizing center. Its subcellular location is the centrosome. It localises to the spindle. The protein localises to the nucleus. Its activity is regulated as follows. GTPase-activating activity is inhibited in the folliculin complex (LFC), which stabilizes the GDP-bound state of RagA/RRAGA (or RagB/RRAGB), because Arg-164 is located far from the RagC/RRAGC or RagD/RRAGD nucleotide pocket. Disassembly of the LFC complex upon amino acid restimulation liberates the GTPase-activating activity. Its function is as follows. Multi-functional protein, involved in both the cellular response to amino acid availability and in the regulation of glycolysis. GTPase-activating protein that plays a key role in the cellular response to amino acid availability through regulation of the non-canonical mTORC1 signaling cascade controlling the MiT/TFE factors tfeb and tfe3. Activates mTORC1 by acting as a GTPase-activating protein: specifically stimulates GTP hydrolysis by RagC/RRAGC or RagD/RRAGD, promoting the conversion to the GDP-bound state of RagC/RRAGC or RagD/RRAGD, and thereby activating the kinase activity of mTORC1. The GTPase-activating activity is inhibited during starvation and activated in presence of nutrients. Acts as a key component for non-canonical mTORC1-dependent control of the MiT/TFE factors tfeb and tfe3, while it is not involved in mTORC1-dependent phosphorylation of canonical RPS6KB1/S6K1 and EIF4EBP1/4E-BP1. In low-amino acid conditions, the lysosomal folliculin complex (LFC) is formed on the membrane of lysosomes, which inhibits the GTPase-activating activity of flcn, inactivates mTORC1 and maximizes nuclear translocation of tfeb and tfe3. Upon amino acid restimulation, RagA/RRAGA (or RagB/RRAGB) nucleotide exchange promotes disassembly of the LFC complex and liberates the GTPase-activating activity of flcn, leading to activation of mTORC1 and subsequent cytoplasmic retention of tfeb and tfe3. Required for the exit of hematopoietic stem cell from pluripotency by promoting mTOR-dependent cytoplasmic retention of tfe3, thereby increasing Wnt signaling. Acts as an inhibitor of browning of adipose tissue by regulating mTOR-dependent cytoplasmic retention of tfe3. In response to flow stress, regulates STK11/LKB1 accumulation and mTORC1 activation through primary cilia. Required for starvation-induced perinuclear clustering of lysosomes by promoting association of rilp with its effector rab34. Involved in the control of embryonic stem cells differentiation; together with lamtor1 it is necessary to recruit and activate RagC/RRAGC and RagD/RRAGD at the lysosomes, and to induce exit of embryonic stem cells from pluripotency via non-canonical, mTOR-independent tfe3 inactivation. Regulates glycolysis by binding to lactate dehydrogenase ldha, acting as an uncompetitive inhibitor. The sequence is that of Folliculin from Xenopus tropicalis (Western clawed frog).